Consider the following 214-residue polypeptide: Ceramide-1-phosphate transfer protein (214 aa).

D56, K60, R106, R110, and H150 together coordinate an N-acylsphingoid base 1-phosphate.

The protein belongs to the GLTP family. Ubiquitous. Detected in heart, brain, placenta, lung, liver, skeletal muscle, kidney, pancreas, spleen, thymus, prostate, testis, ovary, small intestine, colon and peripheral blood leukocytes.

It localises to the cytoplasm. The protein resides in the cytosol. It is found in the golgi apparatus. Its subcellular location is the trans-Golgi network membrane. The protein localises to the cell membrane. It localises to the endosome membrane. The protein resides in the nucleus outer membrane. The catalysed reaction is N-(hexadecanoyl)-sphing-4-enine-1-phosphate(in) = N-(hexadecanoyl)-sphing-4-enine-1-phosphate(out). It catalyses the reaction N-(9Z-octadecenoyl)-sphing-4-enine-1-phosphate(in) = N-(9Z-octadecenoyl)-sphing-4-enine-1-phosphate(out). Functionally, mediates the intracellular transfer of ceramide-1-phosphate (C1P) between organelle membranes and the cell membrane. Required for normal structure of the Golgi stacks. Can bind phosphoceramides with a variety of aliphatic chains, but has a preference for lipids with saturated C16:0 or monounsaturated C18:1 aliphatic chains, and is inefficient with phosphoceramides containing lignoceryl (C24:0). Plays a role in the regulation of the cellular levels of ceramide-1-phosphate, and thereby contributes to the regulation of phospholipase PLA2G4A activity and the release of arachidonic acid. Has no activity with galactosylceramide, lactosylceramide, sphingomyelin, phosphatidylcholine, phosphatidic acid and ceramide. C1P transfer is stimulated by phosphatidylserine in C1P source vesicles. Regulates autophagy, inflammasome mediated IL1B and IL18 processing, and pyroptosis, but not apoptosis. The protein is Ceramide-1-phosphate transfer protein of Homo sapiens (Human).